The sequence spans 188 residues: Elongation factor P-like protein (188 aa).

This sequence belongs to the elongation factor P family.

The protein is Elongation factor P-like protein of Xylella fastidiosa (strain M12).